A 257-amino-acid polypeptide reads, in one-letter code: Probable transcriptional regulatory protein SRU_2667 (257 aa).

The span at 1–15 shows a compositional bias: basic residues; that stretch reads MAGHTRKWAKVKRKK. The disordered stretch occupies residues 1-25; it reads MAGHTRKWAKVKRKKQKDDRRKSKV.

Belongs to the TACO1 family.

Its subcellular location is the cytoplasm. This chain is Probable transcriptional regulatory protein SRU_2667, found in Salinibacter ruber (strain DSM 13855 / M31).